Here is a 627-residue protein sequence, read N- to C-terminus: Ras and EF-hand domain-containing protein homolog (627 aa).

Residues 55 to 245 (YERVIRNFLR…RKLHDSNDGL (191 aa)) adopt a coiled-coil conformation. A phosphoserine mark is found at Ser266 and Ser272. GTP-binding positions include 438-443 (AVGKSS), 541-544 (NKAD), and 578-579 (AK).

It belongs to the small GTPase superfamily. Rab family. As to quaternary structure, homodimer. Interacts with the dynein-dynactin complex.

It is found in the cytoplasm. Its subcellular location is the perinuclear region. Its function is as follows. Binds predominantly GDP, and also GTP. Acts as a dynein adapter protein that activates dynein-mediated transport and dynein-dynactin motility on microtubules. The chain is Ras and EF-hand domain-containing protein homolog (Rasef) from Mus musculus (Mouse).